A 494-amino-acid chain; its full sequence is UDP-glucose 6-dehydrogenase (494 aa).

NAD(+) contacts are provided by residues 11-16, Asp36, Arg41, 89-93, and 130-132; these read GAGYVG, VNTPT, and STV. The disordered stretch occupies residues 88 to 110; sequence SVNTPTKTYGMGKGRAADLKYIE. Positions 129-135 are allosteric switch region; sequence KSTVPVR. Catalysis depends on Glu161, which acts as the Proton donor/acceptor. Residues 161 to 165, 220 to 224, Arg260, and 267 to 273 contribute to the substrate site; these read EFLAE, KLAAN, and KASVGFG. Glu165 provides a ligand contact to NAD(+). Lys220 acts as the Proton donor/acceptor in catalysis. The active-site Nucleophile is the Cys276. Residue 276-279 coordinates NAD(+); the sequence is CFQK. The interval 321-325 is important for formation of active hexamer structure; it reads SLFNT. 338 to 339 is a binding site for substrate; that stretch reads FK. NAD(+) is bound at residue Arg346. Arg442 lines the substrate pocket. The segment at 466-494 is disordered; that stretch reads VSAKRIPFASSCEIPKFSLQDPPVKKPRV.

It belongs to the UDP-glucose/GDP-mannose dehydrogenase family. Homohexamer.

The enzyme catalyses UDP-alpha-D-glucose + 2 NAD(+) + H2O = UDP-alpha-D-glucuronate + 2 NADH + 3 H(+). It participates in nucleotide-sugar biosynthesis; UDP-alpha-D-glucuronate biosynthesis; UDP-alpha-D-glucuronate from UDP-alpha-D-glucose: step 1/1. Its activity is regulated as follows. UDP-alpha-D-xylose (UDX) acts as a feedback inhibitor. It binds at the same site as the substrate, but functions as allosteric inhibitor by triggering a conformation change that disrupts the active hexameric ring structure and gives rise to an inactive, horseshoe-shaped hexamer. Functionally, catalyzes the formation of UDP-alpha-D-glucuronate, a constituent of complex glycosaminoglycans. Required for the biosynthesis of chondroitin sulfate and heparan sulfate. Required for embryonic development via its role in the biosynthesis of glycosaminoglycans. The chain is UDP-glucose 6-dehydrogenase (UGDH) from Gallus gallus (Chicken).